The primary structure comprises 185 residues: Hypoxanthine/guanine phosphoribosyltransferase (185 aa).

Belongs to the purine/pyrimidine phosphoribosyltransferase family. Archaeal HPRT subfamily. Homodimer.

Its subcellular location is the cytoplasm. The catalysed reaction is IMP + diphosphate = hypoxanthine + 5-phospho-alpha-D-ribose 1-diphosphate. It carries out the reaction GMP + diphosphate = guanine + 5-phospho-alpha-D-ribose 1-diphosphate. The protein operates within purine metabolism; IMP biosynthesis via salvage pathway; IMP from hypoxanthine: step 1/1. Functionally, catalyzes a salvage reaction resulting in the formation of IMP that is energically less costly than de novo synthesis. This chain is Hypoxanthine/guanine phosphoribosyltransferase, found in Aciduliprofundum boonei (strain DSM 19572 / T469).